Here is a 92-residue protein sequence, read N- to C-terminus: Actobindin-A (92 aa).

2 disordered regions span residues 1–33 and 54–92; these read MSAP…IGSD and LKHA…AADS. 2 WH2 domains span residues 3-20 and 40-57; these read APNP…LKHT and DHAS…LKHA. Composition is skewed to basic and acidic residues over residues 13-33 and 54-64; these read KGAD…IGSD and LKHAETDDKSA. Residues 68 to 79 show a composition bias toward polar residues; the sequence is NENTTIKPNNHS.

Monomer.

In terms of biological role, is able to bind two actin monomers at high concentrations of G-actin. Inhibits actin polymerization by sequestering G-actin and stabilizing actin dimers. The protein is Actobindin-A (abnA) of Dictyostelium discoideum (Social amoeba).